Consider the following 183-residue polypeptide: MFTPVEAKKSNLITVGRITGVFGIKGWVKLKSFTDPQDNVLEYSPLLLKTKHGVKECEIAEYQFRPQGLVVRLKGVDDRNAAEALAPVDVAIDKSLLPELDDDDFYWHQLEGLRVVTIYEGNTQDLGVVSKVMATGANDVLEVKPDAQSIDDRDRLVPYVLDLYVKKVDLSAECITVDWDPEF.

The PRC barrel domain maps to 102–183 (DDDFYWHQLE…CITVDWDPEF (82 aa)).

It belongs to the RimM family. In terms of assembly, binds ribosomal protein uS19.

It is found in the cytoplasm. In terms of biological role, an accessory protein needed during the final step in the assembly of 30S ribosomal subunit, possibly for assembly of the head region. Essential for efficient processing of 16S rRNA. May be needed both before and after RbfA during the maturation of 16S rRNA. It has affinity for free ribosomal 30S subunits but not for 70S ribosomes. The chain is Ribosome maturation factor RimM from Saccharophagus degradans (strain 2-40 / ATCC 43961 / DSM 17024).